A 248-amino-acid chain; its full sequence is NAD(P)H-quinone oxidoreductase subunit K (248 aa).

[4Fe-4S] cluster contacts are provided by Cys66, Cys67, Cys131, and Cys162.

This sequence belongs to the complex I 20 kDa subunit family. NDH-1 can be composed of about 15 different subunits; different subcomplexes with different compositions have been identified which probably have different functions. [4Fe-4S] cluster is required as a cofactor.

It localises to the cellular thylakoid membrane. The enzyme catalyses a plastoquinone + NADH + (n+1) H(+)(in) = a plastoquinol + NAD(+) + n H(+)(out). It catalyses the reaction a plastoquinone + NADPH + (n+1) H(+)(in) = a plastoquinol + NADP(+) + n H(+)(out). In terms of biological role, NDH-1 shuttles electrons from an unknown electron donor, via FMN and iron-sulfur (Fe-S) centers, to quinones in the respiratory and/or the photosynthetic chain. The immediate electron acceptor for the enzyme in this species is believed to be plastoquinone. Couples the redox reaction to proton translocation, and thus conserves the redox energy in a proton gradient. Cyanobacterial NDH-1 also plays a role in inorganic carbon-concentration. This is NAD(P)H-quinone oxidoreductase subunit K from Synechococcus sp. (strain WH7803).